The primary structure comprises 493 residues: Tripartite motif-containing protein 5 (493 aa).

Residue A2 is modified to N-acetylalanine. Residues 15–59 (CPICLELLTQPLSLDCGHSFCQACLTANHEKSMLDKGESSCPVCR) form an RING-type zinc finger. S86 carries the post-translational modification Phosphoserine. The segment at 90-132 (QKVDHCARHGEKLLLFCQEDGKVICWLCERSQEHRGHHTFLTE) adopts a B box-type zinc-finger fold. Residues C95, H98, C117, and H123 each contribute to the Zn(2+) site. Positions 131–240 (TEEVAQECQV…LISDLEHRLQ (110 aa)) form a coiled coil. The interval 185–198 (FEQLRDILDWEESN) is required for interaction with GABARAP and for autophagy. The B30.2/SPRY domain occupies 281–493 (LKGMLEVFRE…VPMTLCSPSS (213 aa)).

It belongs to the TRIM/RBCC family. In terms of assembly, can form homodimers and homotrimers. In addition to lower-order dimerization, also exhibits a higher-order multimerization and both low- and high-order multimerizations are essential for its restriction activity. Interacts with BTBD1 and BTBD2. Interacts with PSMC4, PSMC5, PSMD7 and HSPA8/HSC70. Interacts (via B30.2/SPRY domain) with HSPA1A/B. Interacts with PSMC2, MAP3K7/TAK1, TAB2 and TAB3. Interacts with SQSTM1. Interacts with TRIM6 and TRIM34. Interacts with ULK1 (phosphorylated form), GABARAP, GABARAPL1, GABARAPL2, MAP1LC3A, MAP1LC3C and BECN1. Post-translationally, degraded in a proteasome-independent fashion in the absence of viral infection but in a proteasome-dependent fashion following exposure to restriction sensitive virus. Autoubiquitinated in a RING finger- and UBE2D2-dependent manner. Monoubiquitinated by TRIM21. Deubiquitinated by Yersinia YopJ. Ubiquitination may not lead to proteasomal degradation.

The protein localises to the cytoplasm. It is found in the nucleus. It catalyses the reaction S-ubiquitinyl-[E2 ubiquitin-conjugating enzyme]-L-cysteine + [acceptor protein]-L-lysine = [E2 ubiquitin-conjugating enzyme]-L-cysteine + N(6)-ubiquitinyl-[acceptor protein]-L-lysine.. It functions in the pathway protein modification; protein ubiquitination. Capsid-specific restriction factor that prevents infection from non-host-adapted retroviruses. Blocks viral replication early in the life cycle, after viral entry but before reverse transcription. In addition to acting as a capsid-specific restriction factor, also acts as a pattern recognition receptor that activates innate immune signaling in response to the retroviral capsid lattice. Binding to the viral capsid triggers its E3 ubiquitin ligase activity, and in concert with the heterodimeric ubiquitin conjugating enzyme complex UBE2V1-UBE2N (also known as UBC13-UEV1A complex) generates 'Lys-63'-linked polyubiquitin chains, which in turn are catalysts in the autophosphorylation of the MAP3K7/TAK1 complex (includes TAK1, TAB2, and TAB3). Activation of the MAP3K7/TAK1 complex by autophosphorylation results in the induction and expression of NF-kappa-B and MAPK-responsive inflammatory genes, thereby leading to an innate immune response in the infected cell. Plays a role in regulating autophagy through activation of autophagy regulator BECN1 by causing its dissociation from its inhibitors BCL2 and TAB2. The sequence is that of Tripartite motif-containing protein 5 (TRIM5) from Gorilla gorilla gorilla (Western lowland gorilla).